A 261-amino-acid polypeptide reads, in one-letter code: 5'-nucleotidase SurE (261 aa).

The a divalent metal cation site is built by D8, D9, S39, and N94.

It belongs to the SurE nucleotidase family. A divalent metal cation serves as cofactor.

Its subcellular location is the cytoplasm. The enzyme catalyses a ribonucleoside 5'-phosphate + H2O = a ribonucleoside + phosphate. Its function is as follows. Nucleotidase that shows phosphatase activity on nucleoside 5'-monophosphates. The protein is 5'-nucleotidase SurE of Archaeoglobus fulgidus (strain ATCC 49558 / DSM 4304 / JCM 9628 / NBRC 100126 / VC-16).